We begin with the raw amino-acid sequence, 159 residues long: Transcriptional repressor NrdR (159 aa).

A zinc finger lies at 3-34 (CPTCQNTDSRVLESRSADTGKSVRRRRECLNC). The ATP-cone domain maps to 49-139 (ISVIKKDGSR…VYRKFNGVKD (91 aa)).

The protein belongs to the NrdR family. It depends on Zn(2+) as a cofactor.

In terms of biological role, negatively regulates transcription of bacterial ribonucleotide reductase nrd genes and operons by binding to NrdR-boxes. This chain is Transcriptional repressor NrdR, found in Prochlorococcus marinus subsp. pastoris (strain CCMP1986 / NIES-2087 / MED4).